The chain runs to 2506 residues: Zinc finger protein 462 (2506 aa).

C2H2-type zinc fingers lie at residues 4 to 27, 108 to 131, and 162 to 185; these read LQCD…QDVH, FQCK…RKVH, and FSCQ…KMYH. A Glycyl lysine isopeptide (Lys-Gly) (interchain with G-Cter in SUMO1); alternate cross-link involves residue Lys-20. Residue Lys-20 forms a Glycyl lysine isopeptide (Lys-Gly) (interchain with G-Cter in SUMO2); alternate linkage. Positions 215–241 are interaction with PBX1; sequence PCKELPAEVVERSILESMVKPLTKSRG. Glycyl lysine isopeptide (Lys-Gly) (interchain with G-Cter in SUMO2) cross-links involve residues Lys-234 and Lys-271. The segment at 280–299 is disordered; sequence QEGTNLPDVPNKSAPSPTSN. Residues Ser-292 and Ser-309 are each glycosylated (O-linked (GlcNAc6P) serine). Residues Lys-337, Lys-347, and Lys-349 each participate in a glycyl lysine isopeptide (Lys-Gly) (interchain with G-Cter in SUMO2) cross-link. The interval 337 to 356 is disordered; it reads KFSPMSYPQMKPKSPHNSGL. Residues Ser-350 and Ser-354 each carry the phosphoserine modification. Lys-428 is covalently cross-linked (Glycyl lysine isopeptide (Lys-Gly) (interchain with G-Cter in SUMO2)). 2 consecutive C2H2-type zinc fingers follow at residues 439 to 462 and 470 to 492; these read FQCP…ENIH and YKCD…KQCH. Lys-484 participates in a covalent cross-link: Glycyl lysine isopeptide (Lys-Gly) (interchain with G-Cter in SUMO2). A disordered region spans residues 535 to 596; the sequence is DPLQQQQPPQ…QPQPPTQAAP (62 aa). Pro residues predominate over residues 542–593; the sequence is PPQPPPPPPPPPPSQPQPLQQPQPPQLQPPHQVPPQPQTQPPPTQQPQPPTQ. A C2H2-type 6 zinc finger spans residues 600–623; the sequence is YKCTMCNYSTTTLKGLRVHQQHKH. Glycyl lysine isopeptide (Lys-Gly) (interchain with G-Cter in SUMO2) cross-links involve residues Lys-631, Lys-657, and Lys-668. The tract at residues 636–661 is disordered; it reads PSSLPLENETDSHPSSSNTVKKSQTS. Over residues 648 to 661 the composition is skewed to polar residues; that stretch reads HPSSSNTVKKSQTS. Position 688 is a phosphoserine (Ser-688). Glycyl lysine isopeptide (Lys-Gly) (interchain with G-Cter in SUMO2) cross-links involve residues Lys-706 and Asp-849. C2H2-type zinc fingers lie at residues 843–866, 886–908, and 925–948; these read YYCK…QRMH, YRCL…YGEH, and YRCR…QRMH. Lys-986 is covalently cross-linked (Glycyl lysine isopeptide (Lys-Gly) (interchain with G-Cter in SUMO2)). A C2H2-type 10 zinc finger spans residues 1030-1053; sequence YDCDVCSFASPNMHSVLVHYQKKH. A Phosphoserine modification is found at Ser-1090. A Glycyl lysine isopeptide (Lys-Gly) (interchain with G-Cter in SUMO2) cross-link involves residue Lys-1135. Positions 1157–1186 are disordered; sequence MRGVEGPQGSPRPPAPIQQLNRSSSERDGP. Ser-1166 bears the Phosphoserine mark. Residues Lys-1206, Lys-1214, Lys-1220, and Lys-1243 each participate in a glycyl lysine isopeptide (Lys-Gly) (interchain with G-Cter in SUMO2) cross-link. C2H2-type zinc fingers lie at residues 1265 to 1288 and 1470 to 1493; these read LKCR…KKDH and YQCT…GKKH. Residue Lys-1499 forms a Glycyl lysine isopeptide (Lys-Gly) (interchain with G-Cter in SUMO2) linkage. Residues 1515–1538 form a C2H2-type 13 zinc finger; sequence YKCRHCPYINTRIHGVLTHYQKRH. Residues Lys-1571 and Lys-1591 each participate in a glycyl lysine isopeptide (Lys-Gly) (interchain with G-Cter in SUMO2) cross-link. C2H2-type zinc fingers lie at residues 1577–1600, 1660–1683, and 1697–1720; these read YRCK…EKYH, FRCQ…RIKH, and FKCA…QKRH. Residues Lys-1698 and Lys-1780 each participate in a glycyl lysine isopeptide (Lys-Gly) (interchain with G-Cter in SUMO2) cross-link. The C2H2-type 17 zinc finger occupies 1892-1914; it reads YQCKHCDSKLQSTAELTSHLNIH. A Glycyl lysine isopeptide (Lys-Gly) (interchain with G-Cter in SUMO2) cross-link involves residue Lys-1946. The segment at 1968–1992 adopts a C2H2-type 18; degenerate zinc-finger fold; sequence YKCKFCVEVHPTLRAICNHLRKHVQ. At Lys-2004 the chain carries N6-methyllysine. 3 C2H2-type zinc fingers span residues 2025–2048, 2054–2077, and 2083–2106; these read YSCQ…QTHH, FRCK…LKAH, and YKCS…LKVH. Residue Lys-2104 forms a Glycyl lysine isopeptide (Lys-Gly) (interchain with G-Cter in SUMO2) linkage. The tract at residues 2122–2152 is disordered; it reads SSHSHHSSQKATPAEEVEDSNDSSYSEPPDV. The span at 2143 to 2152 shows a compositional bias: polar residues; that stretch reads DSSYSEPPDV. Ser-2172 and Ser-2177 each carry phosphoserine. C2H2-type zinc fingers lie at residues 2191-2214, 2220-2243, and 2254-2276; these read LHCE…RDKH, FKCK…EAGH, and LRCP…IVLH. Lys-2293 participates in a covalent cross-link: Glycyl lysine isopeptide (Lys-Gly) (interchain with G-Cter in SUMO2). 2 consecutive C2H2-type zinc fingers follow at residues 2300-2322 and 2328-2351; these read FRCD…IEKH and YKCQ…RDEH. The interval 2371-2396 is disordered; the sequence is MKEKMESSSSDDEDKEEEMNSKAEDR. The C2H2-type 27 zinc-finger motif lies at 2414-2436; sequence FPCEFCGRAFSQGSEWERHVLRH. Residues Lys-2444 and Lys-2504 each participate in a glycyl lysine isopeptide (Lys-Gly) (interchain with G-Cter in SUMO2) cross-link.

In terms of assembly, interacts with PBX1; this interaction prevents PBX1-HOXA9 heterodimer from forming and binding to DNA. In terms of processing, O-GlcNAcylated with O-GlcNAc-6-phosphate.

The protein localises to the nucleus. Functionally, zinc finger nuclear factor involved in transcription by regulating chromatin structure and organization. Involved in the pluripotency and differentiation of embryonic stem cells by regulating SOX2, POU5F1/OCT4, and NANOG. By binding PBX1, prevents the heterodimerization of PBX1 and HOXA9 and their binding to DNA. Regulates neuronal development and neural cell differentiation. This chain is Zinc finger protein 462, found in Homo sapiens (Human).